The sequence spans 676 residues: Methionine--tRNA ligase (676 aa).

The 'HIGH' region motif lies at Pro-15–His-25. 4 residues coordinate Zn(2+): Cys-146, Cys-149, Cys-159, and Cys-162. Positions Lys-332–Ser-336 match the 'KMSKS' region motif. ATP is bound at residue Lys-335. The region spanning Asp-574–Lys-676 is the tRNA-binding domain.

This sequence belongs to the class-I aminoacyl-tRNA synthetase family. MetG type 1 subfamily. Homodimer. It depends on Zn(2+) as a cofactor.

It localises to the cytoplasm. It catalyses the reaction tRNA(Met) + L-methionine + ATP = L-methionyl-tRNA(Met) + AMP + diphosphate. Is required not only for elongation of protein synthesis but also for the initiation of all mRNA translation through initiator tRNA(fMet) aminoacylation. This chain is Methionine--tRNA ligase, found in Pectobacterium atrosepticum (strain SCRI 1043 / ATCC BAA-672) (Erwinia carotovora subsp. atroseptica).